A 380-amino-acid polypeptide reads, in one-letter code: Opsin-2 (380 aa).

Topologically, residues 1-51 are extracellular; the sequence is MVNTTDFYPVPAAMAYESSVGLPLLGWNVPTEHLDLVHPHWRSFQVPNKYW. An N-linked (GlcNAc...) asparagine glycan is attached at N3. A helical transmembrane segment spans residues 52–76; the sequence is HFGLAFVYFMLMCMSSLGNGIVLWI. Residues 77–88 are Cytoplasmic-facing; the sequence is YATTKSIRTPSN. The helical transmembrane segment at 89–115 threads the bilayer; it reads MFIVNLALFDVLMLLEMPMLVVSSLFY. Residues 116–128 lie on the Extracellular side of the membrane; sequence QRPVGWELGCDIY. C125 and C202 are oxidised to a cystine. Residues 129 to 148 form a helical membrane-spanning segment; the sequence is AALGSVAGIGSAINNAAIAF. Residues 149 to 166 lie on the Cytoplasmic side of the membrane; the sequence is DRYRTISCPIDGRLTQGQ. The helical transmembrane segment at 167 to 191 threads the bilayer; it reads VLALIAGTWVWTLPFTLMPLLRIWS. The Extracellular portion of the chain corresponds to 192–215; it reads RFTAEGFLTTCSFDYLTDDEDTKV. The helical transmembrane segment at 216 to 243 threads the bilayer; that stretch reads FVGCIFAWSYAFPLCLICCFYYRLIGAV. At 244–279 the chain is on the cytoplasmic side; it reads REHEKMLRDQAKKMNVKSLQSNADTEAQSAEIRIAK. A helical transmembrane segment spans residues 280-303; that stretch reads VALTIFFLFLCSWTPYAVVAMIGA. Topologically, residues 304–311 are extracellular; sequence FGNRAALT. Residues 312-336 traverse the membrane as a helical segment; it reads PLSTMIPAVTAKIVSCIDPWVYAIN. Position 323 is an N6-(retinylidene)lysine (K323). The Cytoplasmic portion of the chain corresponds to 337-380; that stretch reads HPRFRAEVQKRMKWLHLGEDARSSKSDTSSTATDRTVGNVSASA. The segment at 358-380 is disordered; the sequence is RSSKSDTSSTATDRTVGNVSASA. Residues 362–372 show a composition bias toward low complexity; that stretch reads SDTSSTATDRT.

This sequence belongs to the G-protein coupled receptor 1 family. Opsin subfamily. Phosphorylated on some or all of the serine and threonine residues present in the C-terminal region.

Its subcellular location is the membrane. Functionally, visual pigments are the light-absorbing molecules that mediate vision. They consist of an apoprotein, opsin, covalently linked to cis-retinal. The sequence is that of Opsin-2 (Lo2) from Schistocerca gregaria (Desert locust).